The primary structure comprises 289 residues: Bifunctional protein FolD (289 aa).

NADP(+) is bound by residues 165 to 167 (GAS) and Ser190.

Belongs to the tetrahydrofolate dehydrogenase/cyclohydrolase family. As to quaternary structure, homodimer.

The catalysed reaction is (6R)-5,10-methylene-5,6,7,8-tetrahydrofolate + NADP(+) = (6R)-5,10-methenyltetrahydrofolate + NADPH. The enzyme catalyses (6R)-5,10-methenyltetrahydrofolate + H2O = (6R)-10-formyltetrahydrofolate + H(+). The protein operates within one-carbon metabolism; tetrahydrofolate interconversion. Functionally, catalyzes the oxidation of 5,10-methylenetetrahydrofolate to 5,10-methenyltetrahydrofolate and then the hydrolysis of 5,10-methenyltetrahydrofolate to 10-formyltetrahydrofolate. The sequence is that of Bifunctional protein FolD from Ralstonia nicotianae (strain ATCC BAA-1114 / GMI1000) (Ralstonia solanacearum).